The following is a 386-amino-acid chain: MLLPRCCWGRWLMGRRPRCSCQAPAGFDGKDGRGSRVREKPPWRVLFLGTDHFARETLRALHAARDGKEEKLIEKLEVVTVPSLSPKGLPVKQYAIQSQLPVYEWPDVGSGEYDVGVVASFGRLLSEALILKFPYGILNVHPSCLPRWRGPAPIIHTVLHGDTVTGVTIMQIRPKRFDIGPILQQETIPVPPKSTSKELEAVLSKLGANMLISVLKNLPESLNNGRPQPAEGVTYAPKVSAGTSCVKWEEQTSEQVLRLHLAIGDIVPLQTLWMENTVKLLDLVEVNNSILADPKLTGQTVTPGFVVYHRPSQMLLVRCKDGWIGVRSVMLKKTLTATDFYNGYLHAWYQKNSHAHPSQCRFQTLRLPTKMQQKTKLLLCNSALSS.

Belongs to the Fmt family.

It is found in the mitochondrion. It carries out the reaction L-methionyl-tRNA(fMet) + (6R)-10-formyltetrahydrofolate = N-formyl-L-methionyl-tRNA(fMet) + (6S)-5,6,7,8-tetrahydrofolate + H(+). Functionally, methionyl-tRNA formyltransferase that formylates methionyl-tRNA in mitochondria and is crucial for translation initiation. The sequence is that of Methionyl-tRNA formyltransferase, mitochondrial (Mtfmt) from Mus musculus (Mouse).